The sequence spans 545 residues: Chaperonin GroEL 2 (545 aa).

ATP contacts are provided by residues 29 to 32 (TLGP), 86 to 90 (DGTTT), Gly-413, 479 to 481 (NAA), and Asp-495.

This sequence belongs to the chaperonin (HSP60) family. Forms a cylinder of 14 subunits composed of two heptameric rings stacked back-to-back. Interacts with the co-chaperonin GroES.

Its subcellular location is the cytoplasm. The enzyme catalyses ATP + H2O + a folded polypeptide = ADP + phosphate + an unfolded polypeptide.. Its function is as follows. Together with its co-chaperonin GroES, plays an essential role in assisting protein folding. The GroEL-GroES system forms a nano-cage that allows encapsulation of the non-native substrate proteins and provides a physical environment optimized to promote and accelerate protein folding. This chain is Chaperonin GroEL 2, found in Prochlorococcus marinus (strain SARG / CCMP1375 / SS120).